A 358-amino-acid chain; its full sequence is S-adenosylmethionine:tRNA ribosyltransferase-isomerase (358 aa).

This sequence belongs to the QueA family. In terms of assembly, monomer.

The protein resides in the cytoplasm. It catalyses the reaction 7-aminomethyl-7-carbaguanosine(34) in tRNA + S-adenosyl-L-methionine = epoxyqueuosine(34) in tRNA + adenine + L-methionine + 2 H(+). It functions in the pathway tRNA modification; tRNA-queuosine biosynthesis. Its function is as follows. Transfers and isomerizes the ribose moiety from AdoMet to the 7-aminomethyl group of 7-deazaguanine (preQ1-tRNA) to give epoxyqueuosine (oQ-tRNA). The protein is S-adenosylmethionine:tRNA ribosyltransferase-isomerase of Desulfotalea psychrophila (strain LSv54 / DSM 12343).